A 246-amino-acid polypeptide reads, in one-letter code: tRNA (guanine-N(1)-)-methyltransferase (246 aa).

Residues glycine 114 and 134–139 (IGDYIL) each bind S-adenosyl-L-methionine.

The protein belongs to the RNA methyltransferase TrmD family. As to quaternary structure, homodimer.

The protein resides in the cytoplasm. The catalysed reaction is guanosine(37) in tRNA + S-adenosyl-L-methionine = N(1)-methylguanosine(37) in tRNA + S-adenosyl-L-homocysteine + H(+). In terms of biological role, specifically methylates guanosine-37 in various tRNAs. This chain is tRNA (guanine-N(1)-)-methyltransferase, found in Coxiella burnetii (strain CbuG_Q212) (Coxiella burnetii (strain Q212)).